The chain runs to 428 residues: Serine--tRNA ligase (428 aa).

231-233 (TSE) contacts L-serine. Residues 262-264 (RRE) and valine 278 contribute to the ATP site. Position 285 (glutamate 285) interacts with L-serine. 349-352 (ELTS) is a binding site for ATP. Threonine 384 lines the L-serine pocket.

This sequence belongs to the class-II aminoacyl-tRNA synthetase family. Type-1 seryl-tRNA synthetase subfamily. Homodimer. The tRNA molecule binds across the dimer.

It localises to the cytoplasm. The enzyme catalyses tRNA(Ser) + L-serine + ATP = L-seryl-tRNA(Ser) + AMP + diphosphate + H(+). It carries out the reaction tRNA(Sec) + L-serine + ATP = L-seryl-tRNA(Sec) + AMP + diphosphate + H(+). The protein operates within aminoacyl-tRNA biosynthesis; selenocysteinyl-tRNA(Sec) biosynthesis; L-seryl-tRNA(Sec) from L-serine and tRNA(Sec): step 1/1. In terms of biological role, catalyzes the attachment of serine to tRNA(Ser). Is also able to aminoacylate tRNA(Sec) with serine, to form the misacylated tRNA L-seryl-tRNA(Sec), which will be further converted into selenocysteinyl-tRNA(Sec). In Bifidobacterium animalis subsp. lactis (strain AD011), this protein is Serine--tRNA ligase.